Reading from the N-terminus, the 682-residue chain is Penicillin-binding protein activator LpoA (682 aa).

An N-terminal signal peptide occupies residues 1–26; that stretch reads MLPLNSVRTHAGRLVPVMLAALFLAG. Cys-27 is lipidated: N-palmitoyl cysteine. Cys-27 is lipidated: S-diacylglycerol cysteine. 2 disordered regions span residues 240 to 262 and 314 to 341; these read AKQL…TGET and ANNA…VSPT. Positions 248–262 are enriched in low complexity; the sequence is GGTPPAAAAPTTGET.

The protein belongs to the LpoA family. Interacts with PBP1a.

It localises to the cell outer membrane. Regulator of peptidoglycan synthesis that is essential for the function of penicillin-binding protein 1A (PBP1a). This Dickeya chrysanthemi (strain Ech1591) (Dickeya zeae (strain Ech1591)) protein is Penicillin-binding protein activator LpoA.